We begin with the raw amino-acid sequence, 225 residues long: Phosphatidylserine decarboxylase proenzyme (225 aa).

Ser182 functions as the Schiff-base intermediate with substrate; via pyruvic acid in the catalytic mechanism. A Pyruvic acid (Ser); by autocatalysis modification is found at Ser182.

It belongs to the phosphatidylserine decarboxylase family. PSD-A subfamily. As to quaternary structure, heterodimer of a large membrane-associated beta subunit and a small pyruvoyl-containing alpha subunit. Pyruvate is required as a cofactor. In terms of processing, is synthesized initially as an inactive proenzyme. Formation of the active enzyme involves a self-maturation process in which the active site pyruvoyl group is generated from an internal serine residue via an autocatalytic post-translational modification. Two non-identical subunits are generated from the proenzyme in this reaction, and the pyruvate is formed at the N-terminus of the alpha chain, which is derived from the carboxyl end of the proenzyme. The post-translation cleavage follows an unusual pathway, termed non-hydrolytic serinolysis, in which the side chain hydroxyl group of the serine supplies its oxygen atom to form the C-terminus of the beta chain, while the remainder of the serine residue undergoes an oxidative deamination to produce ammonia and the pyruvoyl prosthetic group on the alpha chain.

It localises to the cell membrane. The enzyme catalyses a 1,2-diacyl-sn-glycero-3-phospho-L-serine + H(+) = a 1,2-diacyl-sn-glycero-3-phosphoethanolamine + CO2. Its pathway is phospholipid metabolism; phosphatidylethanolamine biosynthesis; phosphatidylethanolamine from CDP-diacylglycerol: step 2/2. Catalyzes the formation of phosphatidylethanolamine (PtdEtn) from phosphatidylserine (PtdSer). The protein is Phosphatidylserine decarboxylase proenzyme of Neorickettsia sennetsu (strain ATCC VR-367 / Miyayama) (Ehrlichia sennetsu).